A 218-amino-acid polypeptide reads, in one-letter code: Acetyl- and succinyl-CoA transferase MT0822 (218 aa).

Positions 32–188 constitute an N-acetyltransferase domain; the sequence is DTILEGVHDP…EALLFRLTRD (157 aa). Substrate is bound by residues Gln-94, 109 to 113, 119 to 124, 145 to 151, and Arg-160; these read SGSWL, GHGYGT, and SRSFVDN.

As to quaternary structure, dimer of dimers.

It catalyses the reaction L-lysyl-[protein] + acetyl-CoA = N(6)-acetyl-L-lysyl-[protein] + CoA + H(+). The catalysed reaction is succinyl-CoA + L-lysyl-[protein] = N(6)-succinyl-L-lysyl-[protein] + CoA + H(+). Acetylates and succinylates nucleoid-associated, DNA-binding protein HupB. The chain is Acetyl- and succinyl-CoA transferase MT0822 from Mycobacterium tuberculosis (strain CDC 1551 / Oshkosh).